A 446-amino-acid polypeptide reads, in one-letter code: Glucose-1-phosphate adenylyltransferase (446 aa).

Alpha-D-glucose 1-phosphate contacts are provided by residues Tyr-119, Gly-184, 199–200, and Ser-217; that span reads EK.

Belongs to the bacterial/plant glucose-1-phosphate adenylyltransferase family. Homotetramer.

The catalysed reaction is alpha-D-glucose 1-phosphate + ATP + H(+) = ADP-alpha-D-glucose + diphosphate. Its pathway is glycan biosynthesis; glycogen biosynthesis. Involved in the biosynthesis of ADP-glucose, a building block required for the elongation reactions to produce glycogen. Catalyzes the reaction between ATP and alpha-D-glucose 1-phosphate (G1P) to produce pyrophosphate and ADP-Glc. The sequence is that of Glucose-1-phosphate adenylyltransferase from Rhodopirellula baltica (strain DSM 10527 / NCIMB 13988 / SH1).